The following is a 175-amino-acid chain: Nucleoside diphosphate kinase 6 (175 aa).

ATP-binding residues include lysine 15, phenylalanine 63, arginine 91, threonine 97, arginine 111, and asparagine 121. Catalysis depends on histidine 124, which acts as the Pros-phosphohistidine intermediate.

It belongs to the NDK family. Requires Mg(2+) as cofactor.

The enzyme catalyses a 2'-deoxyribonucleoside 5'-diphosphate + ATP = a 2'-deoxyribonucleoside 5'-triphosphate + ADP. It carries out the reaction a ribonucleoside 5'-diphosphate + ATP = a ribonucleoside 5'-triphosphate + ADP. Major role in the synthesis of nucleoside triphosphates other than ATP. The ATP gamma phosphate is transferred to the NDP beta phosphate via a ping-pong mechanism, using a phosphorylated active-site intermediate. The polypeptide is Nucleoside diphosphate kinase 6 (nme6) (Danio rerio (Zebrafish)).